A 321-amino-acid polypeptide reads, in one-letter code: Glucokinase (321 aa).

8–13 (GDVGGT) is an ATP binding site.

The protein belongs to the bacterial glucokinase family.

It localises to the cytoplasm. It carries out the reaction D-glucose + ATP = D-glucose 6-phosphate + ADP + H(+). The sequence is that of Glucokinase from Salmonella paratyphi B (strain ATCC BAA-1250 / SPB7).